The following is a 618-amino-acid chain: Zinc finger protein 48 (618 aa).

Met-1 is subject to N-acetylmethionine. Basic and acidic residues-rich tracts occupy residues 1-22 and 39-51; these read MERA…EPQR and EFEH…DLGF. Disordered regions lie at residues 1 to 51 and 78 to 109; these read MERA…DLGF and LWVQ…ASSD. Residue Lys-87 forms a Glycyl lysine isopeptide (Lys-Gly) (interchain with G-Cter in SUMO2) linkage. 2 C2H2-type zinc fingers span residues 112 to 134 and 140 to 162; these read AVCG…QRTH and YKCG…QRTH. Positions 157–189 are disordered; the sequence is KHQRTHSGEKPYRARPPAQGPPKIPRSRIPAGE. A Glycyl lysine isopeptide (Lys-Gly) (interchain with G-Cter in SUMO2) cross-link involves residue Lys-179. 2 consecutive C2H2-type zinc fingers follow at residues 192–214 and 220–242; these read TICG…QRTH and YKCG…QRTH. A disordered region spans residues 235 to 271; sequence RIKHQRTHRGEQPPRPVVPRRQPSRAATAATQGPKAQ. Lys-269 is covalently cross-linked (Glycyl lysine isopeptide (Lys-Gly) (interchain with G-Cter in SUMO2)). 2 C2H2-type zinc fingers span residues 275-297 and 303-325; these read YICT…QRSH and FGCD…LRVH. Lys-329 participates in a covalent cross-link: Glycyl lysine isopeptide (Lys-Gly) (interchain with G-Cter in SUMO2). C2H2-type zinc fingers lie at residues 331-353 and 359-381; these read YLCP…LRTH and HACP…RLTH. The segment covering 392-414 has biased composition (pro residues); the sequence is YPLPALIPSPPPPPLGTSPPLTP. The segment at 392–457 is disordered; it reads YPLPALIPSP…DKPHKCPECG (66 aa). The segment covering 415–432 has biased composition (low complexity); that stretch reads RSPSHSGEPFGLPGLEPE. The C2H2-type 9 zinc finger occupies 451–473; the sequence is HKCPECGKGFRRSSDLVKHHRVH. A Glycyl lysine isopeptide (Lys-Gly) (interchain with G-Cter in SUMO2) cross-link involves residue Lys-477. The C2H2-type 10 zinc finger occupies 479-501; sequence YLCPECGKGFADSSARVKHLRTH. Residues 500 to 540 are disordered; that stretch reads THRGERARPPPPSTLLRPHNPPGPVPMAPRPRVRAQPSGPS. Residues 508–528 are compositionally biased toward pro residues; it reads PPPPSTLLRPHNPPGPVPMAP. 2 C2H2-type zinc fingers span residues 543–565 and 571–593; these read HVCG…RRTH and YKCA…QRGH. Residue Lys-610 forms a Glycyl lysine isopeptide (Lys-Gly) (interchain with G-Cter in SUMO2) linkage.

Belongs to the krueppel C2H2-type zinc-finger protein family.

It localises to the nucleus. Its function is as follows. May be involved in transcriptional regulation. The polypeptide is Zinc finger protein 48 (ZNF48) (Homo sapiens (Human)).